Reading from the N-terminus, the 154-residue chain is Endoribonuclease YbeY (154 aa).

3 residues coordinate Zn(2+): H113, H117, and H123.

This sequence belongs to the endoribonuclease YbeY family. It depends on Zn(2+) as a cofactor.

The protein localises to the cytoplasm. Functionally, single strand-specific metallo-endoribonuclease involved in late-stage 70S ribosome quality control and in maturation of the 3' terminus of the 16S rRNA. The sequence is that of Endoribonuclease YbeY from Verminephrobacter eiseniae (strain EF01-2).